The sequence spans 570 residues: Urease subunit alpha (570 aa).

A Urease domain is found at 131–570 (GGFDSHIHFI…LPLAQRYFMF (440 aa)). Ni(2+) is bound by residues His-136, His-138, and Lys-219. An N6-carboxylysine modification is found at Lys-219. His-221 lines the substrate pocket. Ni(2+)-binding residues include His-248 and His-274. His-322 serves as the catalytic Proton donor. Asp-362 serves as a coordination point for Ni(2+).

Belongs to the metallo-dependent hydrolases superfamily. Urease alpha subunit family. As to quaternary structure, heterotrimer of UreA (gamma), UreB (beta) and UreC (alpha) subunits. Three heterotrimers associate to form the active enzyme. Requires Ni cation as cofactor. In terms of processing, carboxylation allows a single lysine to coordinate two nickel ions.

The protein resides in the cytoplasm. It catalyses the reaction urea + 2 H2O + H(+) = hydrogencarbonate + 2 NH4(+). Its pathway is nitrogen metabolism; urea degradation; CO(2) and NH(3) from urea (urease route): step 1/1. This Rhodopseudomonas palustris (strain ATCC BAA-98 / CGA009) protein is Urease subunit alpha.